Reading from the N-terminus, the 258-residue chain is UPF0246 protein YaaA (258 aa).

Belongs to the UPF0246 family.

The polypeptide is UPF0246 protein YaaA (Escherichia coli O7:K1 (strain IAI39 / ExPEC)).